The sequence spans 90 residues: MKKKGGRKIFGFMVKEEKEENWGSVEFQVFSFTNKIRRLASHLELHKKDFSSERGLRRLLGKRQRLLAYLAKKNRVRYKKLISQLDIRER.

This sequence belongs to the universal ribosomal protein uS15 family. Part of the 30S ribosomal subunit.

Its subcellular location is the plastid. It localises to the chloroplast. The chain is Small ribosomal subunit protein uS15c (rps15-A) from Oryza nivara (Indian wild rice).